A 280-amino-acid polypeptide reads, in one-letter code: Formamidopyrimidine-DNA glycosylase (280 aa).

P2 (schiff-base intermediate with DNA) is an active-site residue. Catalysis depends on E3, which acts as the Proton donor. The active-site Proton donor; for beta-elimination activity is the K60. H93 and R112 together coordinate DNA. The FPG-type zinc finger occupies 240-274 (YVYGQHSKPCRVCGADIIKIKVGGRGTHLCPTCQP). The Proton donor; for delta-elimination activity role is filled by R264.

The protein belongs to the FPG family. In terms of assembly, monomer. Zn(2+) is required as a cofactor.

The enzyme catalyses Hydrolysis of DNA containing ring-opened 7-methylguanine residues, releasing 2,6-diamino-4-hydroxy-5-(N-methyl)formamidopyrimidine.. It catalyses the reaction 2'-deoxyribonucleotide-(2'-deoxyribose 5'-phosphate)-2'-deoxyribonucleotide-DNA = a 3'-end 2'-deoxyribonucleotide-(2,3-dehydro-2,3-deoxyribose 5'-phosphate)-DNA + a 5'-end 5'-phospho-2'-deoxyribonucleoside-DNA + H(+). Involved in base excision repair of DNA damaged by oxidation or by mutagenic agents. Acts as a DNA glycosylase that recognizes and removes damaged bases. Has a preference for oxidized purines, such as 7,8-dihydro-8-oxoguanine (8-oxoG). Has AP (apurinic/apyrimidinic) lyase activity and introduces nicks in the DNA strand. Cleaves the DNA backbone by beta-delta elimination to generate a single-strand break at the site of the removed base with both 3'- and 5'-phosphates. This is Formamidopyrimidine-DNA glycosylase from Oceanobacillus iheyensis (strain DSM 14371 / CIP 107618 / JCM 11309 / KCTC 3954 / HTE831).